Reading from the N-terminus, the 419-residue chain is UDP-N-acetylglucosamine 1-carboxyvinyltransferase (419 aa).

A phosphoenolpyruvate-binding site is contributed by 22–23; sequence KN. Arg-91 contributes to the UDP-N-acetyl-alpha-D-glucosamine binding site. Cys-115 (proton donor) is an active-site residue. 2-(S-cysteinyl)pyruvic acid O-phosphothioketal is present on Cys-115. UDP-N-acetyl-alpha-D-glucosamine-binding positions include 120 to 124, 160 to 163, Asp-305, and Ile-327; these read RPVDL and KVSV.

The protein belongs to the EPSP synthase family. MurA subfamily.

It is found in the cytoplasm. It carries out the reaction phosphoenolpyruvate + UDP-N-acetyl-alpha-D-glucosamine = UDP-N-acetyl-3-O-(1-carboxyvinyl)-alpha-D-glucosamine + phosphate. It participates in cell wall biogenesis; peptidoglycan biosynthesis. Its function is as follows. Cell wall formation. Adds enolpyruvyl to UDP-N-acetylglucosamine. The polypeptide is UDP-N-acetylglucosamine 1-carboxyvinyltransferase (Sodalis glossinidius (strain morsitans)).